We begin with the raw amino-acid sequence, 244 residues long: Small ribosomal subunit protein eS4 (244 aa).

The S4 RNA-binding domain maps to 43–106 (LPLLLVVRDV…DENYLVLFDE (64 aa)).

Belongs to the eukaryotic ribosomal protein eS4 family.

The sequence is that of Small ribosomal subunit protein eS4 from Methanococcus maripaludis (strain C5 / ATCC BAA-1333).